We begin with the raw amino-acid sequence, 241 residues long: Probable septum site-determining protein MinC (241 aa).

Belongs to the MinC family. Interacts with MinD and FtsZ.

In terms of biological role, cell division inhibitor that blocks the formation of polar Z ring septums. Rapidly oscillates between the poles of the cell to destabilize FtsZ filaments that have formed before they mature into polar Z rings. Prevents FtsZ polymerization. This chain is Probable septum site-determining protein MinC, found in Rhizobium rhizogenes (strain K84 / ATCC BAA-868) (Agrobacterium radiobacter).